The chain runs to 282 residues: AB hydrolase superfamily protein FGSG_00045 (282 aa).

Positions 1-10 are enriched in polar residues; the sequence is MAPISSTRPS. Residues 1-22 are disordered; it reads MAPISSTRPSHSIAADNPNPTT. The AB hydrolase-1 domain occupies 22 to 270; the sequence is TQVNFNTNMT…FADMVKRWII (249 aa).

The protein belongs to the AB hydrolase superfamily.

It participates in mycotoxin biosynthesis. Functionally, AB hydrolase superfamily protein; part of the gene cluster that mediates the biosynthesis of gramillins A and B, bicyclic lipopeptides that induce cell death in maize leaves but not in wheat leaves. The nonribosomal peptide synthetase GRA1 incorporates respectively a glutamic adic (Glu), a leucine (Leu), a serine (Ser), a hydroxyglutamine (HOGln), a 2-amino decanoic acid, and 2 cysteins (CysB and CysA). The biosynthesis of 2-amino decanoic acid incorporated in gramillins could be initiated by a fatty acid synthase composed of the alpha and beta subunits FGSG_00036 and FGSG_11656. The cytochrome P450 monooxygenase FGSG_15680 could hydroxylate the fatty acid chain. Subsequent oxidation to the ketone by the oxidoreductase FGSG_00048 and transamination by aminotransferase FGSG_00049 could form 2-amino-decanoic acid. On the other hand, FGSG_15680 could also be responsible for the HO-modified glutamine at the gamma-position. Whether hydroxylation occurs on the fully assembled product or on the Gln residue prior to assembly into the gramillins requires further proof. The thioredoxin FGSG_00043 could also be required for the disulfide-bond formation between CysA and CysB. The specific involvement of the remaining proteins from the cluster is more difficult to discern, but could have broader regulatory (FGSG_00040 and FGSG_11657) or enzymatic functions (FGSG_00044 and FGSG_00045). The final C-domain of GRA1 does not possess the expected sequence of a termination CT domain, often implicated in macrocyclization and release of a cyclopeptidein fungal NRPs; and the thioesterase FGSG_00047 may act in concert with the terminal C-domain of GRA1 to catalyze the formation of the macrocyclic anhydride and release of the products. In Gibberella zeae (strain ATCC MYA-4620 / CBS 123657 / FGSC 9075 / NRRL 31084 / PH-1) (Wheat head blight fungus), this protein is AB hydrolase superfamily protein FGSG_00045.